We begin with the raw amino-acid sequence, 176 residues long: Probable DNA-directed RNA polymerase subunit delta (176 aa).

The HTH HARE-type domain occupies 14 to 81 (KSFIDMAYTL…GENLWGLRDW (68 aa)). Residues 114-176 (LGEDEMDDDD…DFEDEEDFKA (63 aa)) are disordered. Acidic residues-rich tracts occupy residues 116 to 145 (EDEMDDDDDIPAQTDDQEELNDPEDEQVEE) and 153 to 176 (VIEEDEDELDEDEEDFEDEEDFKA).

The protein belongs to the RpoE family. In terms of assembly, RNAP is composed of a core of 2 alpha, a beta and a beta' subunits. The core is associated with a delta subunit and one of several sigma factors.

Functionally, participates in both the initiation and recycling phases of transcription. In the presence of the delta subunit, RNAP displays an increased specificity of transcription, a decreased affinity for nucleic acids, and an increased efficiency of RNA synthesis because of enhanced recycling. This is Probable DNA-directed RNA polymerase subunit delta from Staphylococcus aureus (strain bovine RF122 / ET3-1).